A 654-amino-acid chain; its full sequence is Acetyl-coenzyme A synthetase (654 aa).

Residues 193-196 (RRGK) and T313 each bind CoA. ATP is bound by residues 389-391 (GEP), 413-418 (DTWWQT), D506, and R521. S529 is a binding site for CoA. ATP is bound at residue R532. Residues H545 and V548 each coordinate Mg(2+). Residue K619 is modified to N6-acetyllysine.

Belongs to the ATP-dependent AMP-binding enzyme family. Requires Mg(2+) as cofactor. Acetylated. Deacetylation by the SIR2-homolog deacetylase activates the enzyme.

The catalysed reaction is acetate + ATP + CoA = acetyl-CoA + AMP + diphosphate. Its function is as follows. Catalyzes the conversion of acetate into acetyl-CoA (AcCoA), an essential intermediate at the junction of anabolic and catabolic pathways. AcsA undergoes a two-step reaction. In the first half reaction, AcsA combines acetate with ATP to form acetyl-adenylate (AcAMP) intermediate. In the second half reaction, it can then transfer the acetyl group from AcAMP to the sulfhydryl group of CoA, forming the product AcCoA. In Wolinella succinogenes (strain ATCC 29543 / DSM 1740 / CCUG 13145 / JCM 31913 / LMG 7466 / NCTC 11488 / FDC 602W) (Vibrio succinogenes), this protein is Acetyl-coenzyme A synthetase.